Consider the following 477-residue polypeptide: RTX-III toxin determinant D (477 aa).

Residues 1–59 (MKLWILGLGEFFQRYRNIWREIWKIRKQLDTPARQKDENEFLPRHLELIETPISKKPRL) are Cytoplasmic-facing. The chain crosses the membrane as a helical span at residues 60 to 77 (IAYLIMLFLFLAIVISII). Residues 78 to 477 (SKVEIVASAT…ESITESLRER (400 aa)) are Periplasmic-facing.

It belongs to the membrane fusion protein (MFP) (TC 8.A.1) family.

It localises to the cell inner membrane. In terms of biological role, involved in the transport of the toxin RTX-III. The chain is RTX-III toxin determinant D (apxIIID) from Actinobacillus pleuropneumoniae (Haemophilus pleuropneumoniae).